The sequence spans 508 residues: Amphoterin-induced protein 3 (508 aa).

An N-terminal signal peptide occupies residues 1 to 19; the sequence is MAWLVLLGLLLCMLGAGSG. Residues 20–383 lie on the Extracellular side of the membrane; the sequence is TSDLEGVLPP…PRPEPEAFNT (364 aa). The LRRNT domain maps to 25 to 61; sequence GVLPPDPHNCPNKCVCAADVLSCAGRGLQDLPAALPA. 2 cysteine pairs are disulfide-bonded: Cys-34–Cys-40 and Cys-38–Cys-47. LRR repeat units lie at residues 62–83, 86–107, 110–131, 134–155, 158–178, and 184–207; these read TAAE…WLAP, RLRA…VFTN, GLRI…DLDG, ELEK…AFQG, MLSH…NHLH, and RLRT…AALP. A glycan (N-linked (GlcNAc...) asparagine) is linked at Asn-107. The LRRCT domain occupies 219-275; sequence NPLPCDCSLYHLLRRWHQRGLSALHDFEREYTCLAFKVAESRVRFFEHSRVFKNCSV. 3 disulfides stabilise this stretch: Cys-223–Cys-251, Cys-225–Cys-273, and Cys-300–Cys-352. Asn-272, Asn-301, Asn-362, and Asn-368 each carry an N-linked (GlcNAc...) asparagine glycan. Residues 279–370 form the Ig-like C2-type domain; it reads PGLELPEEEL…HNQTLEYNVS (92 aa). The chain crosses the membrane as a helical span at residues 384–404; sequence GFTTLLGCIVGLVLVLLYLFA. Residues 405-508 are Cytoplasmic-facing; sequence PPCRGCCRCC…STGSEGLMMS (104 aa).

It belongs to the immunoglobulin superfamily. AMIGO family. Binds AMIGO1 or AMIGO2.

It localises to the membrane. Its function is as follows. May mediate heterophilic cell-cell interaction. May contribute to signal transduction through its intracellular domain. The chain is Amphoterin-induced protein 3 from Rattus norvegicus (Rat).